A 191-amino-acid chain; its full sequence is Orotate phosphoribosyltransferase (191 aa).

Residue Glu114 to Ser122 coordinates 5-phospho-alpha-D-ribose 1-diphosphate. Positions 118 and 146 each coordinate orotate.

It belongs to the purine/pyrimidine phosphoribosyltransferase family. PyrE subfamily. In terms of assembly, homodimer. Requires Mg(2+) as cofactor.

It catalyses the reaction orotidine 5'-phosphate + diphosphate = orotate + 5-phospho-alpha-D-ribose 1-diphosphate. It participates in pyrimidine metabolism; UMP biosynthesis via de novo pathway; UMP from orotate: step 1/2. Functionally, catalyzes the transfer of a ribosyl phosphate group from 5-phosphoribose 1-diphosphate to orotate, leading to the formation of orotidine monophosphate (OMP). The protein is Orotate phosphoribosyltransferase of Desulforamulus reducens (strain ATCC BAA-1160 / DSM 100696 / MI-1) (Desulfotomaculum reducens).